The following is a 178-amino-acid chain: Large ribosomal subunit protein bL25 (178 aa).

This sequence belongs to the bacterial ribosomal protein bL25 family. CTC subfamily. Part of the 50S ribosomal subunit; part of the 5S rRNA/L5/L18/L25 subcomplex. Contacts the 5S rRNA. Binds to the 5S rRNA independently of L5 and L18.

In terms of biological role, this is one of the proteins that binds to the 5S RNA in the ribosome where it forms part of the central protuberance. The chain is Large ribosomal subunit protein bL25 from Campylobacter hominis (strain ATCC BAA-381 / DSM 21671 / CCUG 45161 / LMG 19568 / NCTC 13146 / CH001A).